The chain runs to 322 residues: Ferredoxin--NADP reductase (322 aa).

FAD-binding residues include Thr-12, Glu-31, Gln-39, Tyr-44, Ala-86, Phe-119, and Thr-317.

The protein belongs to the ferredoxin--NADP reductase type 2 family. As to quaternary structure, homodimer. The cofactor is FAD.

The catalysed reaction is 2 reduced [2Fe-2S]-[ferredoxin] + NADP(+) + H(+) = 2 oxidized [2Fe-2S]-[ferredoxin] + NADPH. The chain is Ferredoxin--NADP reductase from Acholeplasma laidlawii (strain PG-8A).